A 61-amino-acid polypeptide reads, in one-letter code: Large ribosomal subunit protein uL29 (61 aa).

Belongs to the universal ribosomal protein uL29 family.

The chain is Large ribosomal subunit protein uL29 from Campylobacter jejuni subsp. jejuni serotype O:6 (strain 81116 / NCTC 11828).